Reading from the N-terminus, the 61-residue chain is Large ribosomal subunit protein bL32 (61 aa).

The segment covering 1–16 has biased composition (basic residues); it reads MAVPKRKTSPSKRGMR. Positions 1–35 are disordered; the sequence is MAVPKRKTSPSKRGMRRSADGLKSATYVEDKNSGE.

It belongs to the bacterial ribosomal protein bL32 family.

The polypeptide is Large ribosomal subunit protein bL32 (Agrobacterium fabrum (strain C58 / ATCC 33970) (Agrobacterium tumefaciens (strain C58))).